Consider the following 52-residue polypeptide: Large ribosomal subunit protein bL33 (52 aa).

It belongs to the bacterial ribosomal protein bL33 family.

This chain is Large ribosomal subunit protein bL33, found in Anaeromyxobacter sp. (strain Fw109-5).